A 326-amino-acid chain; its full sequence is Interleukin-1-binding protein (326 aa).

The N-terminal stretch at 1 to 18 is a signal peptide; it reads MSIPPVIFLPIFFYSSFV. Ig-like C2-type domains are found at residues 24-115, 122-208, and 221-322; these read PECI…LNLT, SNID…YDVT, and PPTM…KTVT. C48 and C99 are oxidised to a cystine. N-linked (GlcNAc...) asparagine; by host glycosylation is found at N80, N103, and N113. C143 and C194 form a disulfide bridge. N237 carries an N-linked (GlcNAc...) asparagine; by host glycan. A disulfide bridge connects residues C242 and C309.

Belongs to the interleukin-1 receptor family. Interacts with mouse Il1b.

It is found in the secreted. Its function is as follows. May reduce the host inflammatory response by interacting with inteleukin-1 beta (Il1b) and thus decreasing the association between IL1B and its cellular receptor. This is Interleukin-1-binding protein (OPG201) from Bos taurus (Bovine).